The following is a 710-amino-acid chain: MSESDGAFKSPSLPPSHHAPAPMSPEKIRAPAEQMDGPVEGVIDEIETAEVQAEKESKISVQAPALHYEVPPWACEPDPAHKFQFEILKEGKLIASYDLSNRKNSTFVVIGRIKPGCDLLMEHPSISRYHCILQYGNDKMSKTGKGWHIFELGSTHGSRMNKKRLPPKQYIRTRVGFIFQFGESTRILNFVGPEEDSEPEWDCSPTEMKLRKHKKELEAKLRAAAAQEMIDDEKREKEEEGCGWGMDYGEDEKPLTTVETDAHLMEDREAYYNQDPKKALQKFFEREGFDMNFEFSEQGQGHTHKWVCSIELPVEIDGVDRAFTASATVSTSKKDAQIQCALDACRILDTYNVLRKSNTKLRMQRKTLEANDYYDEDDDLYLDRTGQLEKQREKRKQWAEEGFGHKRTETDTYESLCRKLEESKKEIIECQKHLDELSAGTKKSRTIDQGGDVLDDYIRQLEKSGGAGDDAKTKMEKSKWRQKLMAATHESQKLEKLVKIAKPAVVKGLEQLETTAANDRQAFLKKLMGVRARKEIDQTPSQGPGPSTSATLPATVAPTSTKAVEVEHEKKMTPLKVEKEIAASLDSSEIKNSLPAVDEPSSVKDEVSEETPQKEAFGSKVQKRVAQWEEELEAEKEELAKKQKLEAEEEAKKKVQRVRRRDIEKKIAGSEDYGAGVEDRDEKYSTWMPPNADQSEAKQDALRAKFAGRY.

The interval 1-40 (MSESDGAFKSPSLPPSHHAPAPMSPEKIRAPAEQMDGPVE) is disordered. Low complexity predominate over residues 15–25 (PSHHAPAPMSP). In terms of domain architecture, FHA spans 108–165 (VVIGRIKPGCDLLMEHPSISRYHCILQYGNDKMSKTGKGWHIFELGSTHGSRMNKKRL). 3 coiled-coil regions span residues 206–240 (TEMKLRKHKKELEAKLRAAAAQEMIDDEKREKEEE), 409–440 (ETDTYESLCRKLEESKKEIIECQKHLDELSAG), and 471–502 (AKTKMEKSKWRQKLMAATHESQKLEKLVKIAK). The interval 230 to 250 (IDDEKREKEEEGCGWGMDYGE) is disordered. Disordered stretches follow at residues 535-560 (EIDQTPSQGPGPSTSATLPATVAPTS), 591-619 (KNSLPAVDEPSSVKDEVSEETPQKEAFGS), and 671-710 (EDYGAGVEDRDEKYSTWMPPNADQSEAKQDALRAKFAGRY). The segment covering 538 to 560 (QTPSQGPGPSTSATLPATVAPTS) has biased composition (polar residues). Positions 613-661 (QKEAFGSKVQKRVAQWEEELEAEKEELAKKQKLEAEEEAKKKVQRVRRR) form a coiled coil.

This is an uncharacterized protein from Caenorhabditis elegans.